The following is a 470-amino-acid chain: Cupincin (470 aa).

Residues 1–34 (MAKKKTSSSMARSQLAALLISLCFLSLASNAVGW) form the signal peptide. Residues 36-52 (RRGEREEEDERRRHGGE) show a composition bias toward basic and acidic residues. Disordered regions lie at residues 36 to 59 (RRGEREEEDERRRHGGEGGRPYHL) and 240 to 261 (KSCSRGGGGGSGSEWEIKPSSL). Cupin type-1 domains follow at residues 57–215 (YHLG…EELE) and 259–445 (SSLT…AREA). Residue Asn297 is glycosylated (N-linked (GlcNAc...) asparagine). The disordered stretch occupies residues 330 to 368 (PHVSGGGSSERREREREHGRRREEEQGEEEHGERGEKAR). Positions 338 to 367 (SERREREREHGRRREEEQGEEEHGERGEKA) are enriched in basic and acidic residues. Zn(2+) is bound by residues His347, Glu352, and His360.

Belongs to the 7S seed storage protein family. Homotrimer. Requires Zn(2+) as cofactor.

The protein localises to the secreted. Seed storage protein. Globulin-like protein that acts as a zinc metalloprotease. Cleaves specifically between Leu-15 and Tyr-16 of insulin B chain, and Gln-1 and Leu-2 of neurotensin (NT) peptide in vitro. May play a role as an initiating endopeptidase in germinating seeds. The protein is Cupincin of Oryza sativa subsp. japonica (Rice).